Consider the following 425-residue polypeptide: Enolase (425 aa).

Gln-163 lines the (2R)-2-phosphoglycerate pocket. The Proton donor role is filled by Glu-205. Residues Asp-242, Glu-285, and Asp-312 each coordinate Mg(2+). Positions 337, 366, 367, and 388 each coordinate (2R)-2-phosphoglycerate. Residue Lys-337 is the Proton acceptor of the active site.

The protein belongs to the enolase family. Mg(2+) is required as a cofactor.

It localises to the cytoplasm. Its subcellular location is the secreted. The protein resides in the cell surface. The catalysed reaction is (2R)-2-phosphoglycerate = phosphoenolpyruvate + H2O. The protein operates within carbohydrate degradation; glycolysis; pyruvate from D-glyceraldehyde 3-phosphate: step 4/5. Its function is as follows. Catalyzes the reversible conversion of 2-phosphoglycerate (2-PG) into phosphoenolpyruvate (PEP). It is essential for the degradation of carbohydrates via glycolysis. This Cereibacter sphaeroides (strain ATCC 17025 / ATH 2.4.3) (Rhodobacter sphaeroides) protein is Enolase.